A 78-amino-acid polypeptide reads, in one-letter code: MALFEDIQAVITEQLNVDAAQVTLEAEFVKDLGADSLDVVELIMALEEKFGIEIPDEQAEKIVNVGDVVKYIEDNKLA.

A Carrier domain is found at 1–76; it reads MALFEDIQAV…DVVKYIEDNK (76 aa). Serine 36 is subject to O-(pantetheine 4'-phosphoryl)serine.

Belongs to the acyl carrier protein (ACP) family. Post-translationally, 4'-phosphopantetheine is transferred from CoA to a specific serine of apo-ACP by AcpS. This modification is essential for activity because fatty acids are bound in thioester linkage to the sulfhydryl of the prosthetic group.

It is found in the cytoplasm. Its pathway is lipid metabolism; fatty acid biosynthesis. Functionally, carrier of the growing fatty acid chain in fatty acid biosynthesis. The polypeptide is Acyl carrier protein (Helicobacter acinonychis (strain Sheeba)).